Here is a 346-residue protein sequence, read N- to C-terminus: Dihydroorotase (346 aa).

His14 and His16 together coordinate Zn(2+). Substrate-binding positions include His16–Arg18 and Asn42. Positions 100, 137, and 175 each coordinate Zn(2+). An N6-carboxylysine modification is found at Lys100. Substrate is bound at residue His137. Leu220 serves as a coordination point for substrate. Position 248 (Asp248) interacts with Zn(2+). Asp248 is an active-site residue. Residues His252 and Ala264 each coordinate substrate.

The protein belongs to the metallo-dependent hydrolases superfamily. DHOase family. Class II DHOase subfamily. As to quaternary structure, homodimer. It depends on Zn(2+) as a cofactor.

It catalyses the reaction (S)-dihydroorotate + H2O = N-carbamoyl-L-aspartate + H(+). The protein operates within pyrimidine metabolism; UMP biosynthesis via de novo pathway; (S)-dihydroorotate from bicarbonate: step 3/3. Catalyzes the reversible cyclization of carbamoyl aspartate to dihydroorotate. The protein is Dihydroorotase of Ruegeria pomeroyi (strain ATCC 700808 / DSM 15171 / DSS-3) (Silicibacter pomeroyi).